Consider the following 172-residue polypeptide: Inorganic pyrophosphatase (172 aa).

K28, R42, and Y54 together coordinate substrate. D64, D69, and D101 together coordinate Mg(2+). Y140 serves as a coordination point for substrate.

It belongs to the PPase family. Homohexamer. Mg(2+) serves as cofactor.

Its subcellular location is the cytoplasm. The enzyme catalyses diphosphate + H2O = 2 phosphate + H(+). In terms of biological role, catalyzes the hydrolysis of inorganic pyrophosphate (PPi) forming two phosphate ions. The polypeptide is Inorganic pyrophosphatase (Campylobacter jejuni subsp. jejuni serotype O:2 (strain ATCC 700819 / NCTC 11168)).